A 217-amino-acid chain; its full sequence is Coiled-coil domain-containing protein 124 (217 aa).

The segment at Met-1–Glu-120 is disordered. Residues Ala-15–Lys-82 are a coiled coil. Basic and acidic residues-rich tracts occupy residues Arg-18–Leu-74 and Gln-98–Glu-120. 2 positions are modified to phosphoserine: Ser-136 and Ser-188.

This sequence belongs to the CCDC124 family. As to quaternary structure, associates with translationally inactive ribosomes in the nonrotated state. Interacts with RASGEF1B.

It localises to the cytoplasm. Its subcellular location is the cytoskeleton. The protein resides in the microtubule organizing center. It is found in the centrosome. The protein localises to the midbody. Ribosome-binding protein involved in ribosome hibernation: associates with translationally inactive ribosomes and stabilizes the nonrotated conformation of the 80S ribosome, thereby promoting ribosome preservation and storage. Also required for proper progression of late cytokinetic stages. The protein is Coiled-coil domain-containing protein 124 (Ccdc124) of Mus musculus (Mouse).